A 178-amino-acid polypeptide reads, in one-letter code: Probable chorismate pyruvate-lyase (178 aa).

The substrate site is built by Arg-72, Leu-110, and Glu-169.

Belongs to the UbiC family.

The protein resides in the cytoplasm. It catalyses the reaction chorismate = 4-hydroxybenzoate + pyruvate. Its pathway is cofactor biosynthesis; ubiquinone biosynthesis. Removes the pyruvyl group from chorismate, with concomitant aromatization of the ring, to provide 4-hydroxybenzoate (4HB) for the ubiquinone pathway. This is Probable chorismate pyruvate-lyase from Nitrosomonas europaea (strain ATCC 19718 / CIP 103999 / KCTC 2705 / NBRC 14298).